Consider the following 98-residue polypeptide: NADH-ubiquinone oxidoreductase chain 4L (98 aa).

Transmembrane regions (helical) follow at residues 1–21 (MSLAHINIFLAFTVSLVGLLM), 25–45 (HLMSSLLCLEGMMLSLFVMAT), and 59–81 (MPIILLVFAACERALGLSLLVMV).

It belongs to the complex I subunit 4L family. In terms of assembly, core subunit of respiratory chain NADH dehydrogenase (Complex I) which is composed of 45 different subunits.

Its subcellular location is the mitochondrion inner membrane. It catalyses the reaction a ubiquinone + NADH + 5 H(+)(in) = a ubiquinol + NAD(+) + 4 H(+)(out). Core subunit of the mitochondrial membrane respiratory chain NADH dehydrogenase (Complex I) which catalyzes electron transfer from NADH through the respiratory chain, using ubiquinone as an electron acceptor. Part of the enzyme membrane arm which is embedded in the lipid bilayer and involved in proton translocation. The protein is NADH-ubiquinone oxidoreductase chain 4L (MT-ND4L) of Equus asinus (Donkey).